A 133-amino-acid polypeptide reads, in one-letter code: Small ribosomal subunit protein uS8 (133 aa).

Belongs to the universal ribosomal protein uS8 family. As to quaternary structure, part of the 30S ribosomal subunit. Contacts proteins S5 and S12.

Its function is as follows. One of the primary rRNA binding proteins, it binds directly to 16S rRNA central domain where it helps coordinate assembly of the platform of the 30S subunit. The sequence is that of Small ribosomal subunit protein uS8 from Chlorobaculum parvum (strain DSM 263 / NCIMB 8327) (Chlorobium vibrioforme subsp. thiosulfatophilum).